The primary structure comprises 389 residues: SH3 and F-BAR domain-containing protein DDB_G0274695 (389 aa).

Positions 3 to 258 constitute an F-BAR domain; the sequence is EQFKDNFWGP…VITQIDKLED (256 aa). Residues 119–192 are a coiled coil; that stretch reads KLNKERKDME…QDYRDSVNKL (74 aa). Over residues 300–328 the composition is skewed to low complexity; that stretch reads LTSSVSSNSLTSSYNSATTTPTPAPRSTP. Residues 300–329 are disordered; it reads LTSSVSSNSLTSSYNSATTTPTPAPRSTPI. The 58-residue stretch at 332-389 folds into the SH3 domain; that stretch reads SKKKQAKALYDYVGSDATELDFFAGDIITILDEDESGWFRGELGDRIGLYPSNYCEPI.

In Dictyostelium discoideum (Social amoeba), this protein is SH3 and F-BAR domain-containing protein DDB_G0274695.